We begin with the raw amino-acid sequence, 147 residues long: Large ribosomal subunit protein bL9 (147 aa).

Belongs to the bacterial ribosomal protein bL9 family.

Its function is as follows. Binds to the 23S rRNA. The protein is Large ribosomal subunit protein bL9 of Bacteroides thetaiotaomicron (strain ATCC 29148 / DSM 2079 / JCM 5827 / CCUG 10774 / NCTC 10582 / VPI-5482 / E50).